The following is a 155-amino-acid chain: MKIQLIAVGTKMPDWVTKGFEEYQRRFPKDMPFELIEIPAGKRGKNADIKRILEQEGKAMLSACQKSRIITLDIPGKPWTTEQLAQQLEAWKHDGRNVALLIGGPEGLSPECKAATEQSWSLSPLTLPHPLVRIIVAESLYRAWSLSTNHPYHRE.

S-adenosyl-L-methionine contacts are provided by residues leucine 72, glycine 103, and 122 to 127; that span reads LSPLTL.

The protein belongs to the RNA methyltransferase RlmH family. As to quaternary structure, homodimer.

Its subcellular location is the cytoplasm. It catalyses the reaction pseudouridine(1915) in 23S rRNA + S-adenosyl-L-methionine = N(3)-methylpseudouridine(1915) in 23S rRNA + S-adenosyl-L-homocysteine + H(+). Specifically methylates the pseudouridine at position 1915 (m3Psi1915) in 23S rRNA. In Histophilus somni (strain 129Pt) (Haemophilus somnus), this protein is Ribosomal RNA large subunit methyltransferase H.